Consider the following 213-residue polypeptide: Protein-L-isoaspartate O-methyltransferase (213 aa).

The active site involves Ser-64.

The protein belongs to the methyltransferase superfamily. L-isoaspartyl/D-aspartyl protein methyltransferase family.

The protein localises to the cytoplasm. It catalyses the reaction [protein]-L-isoaspartate + S-adenosyl-L-methionine = [protein]-L-isoaspartate alpha-methyl ester + S-adenosyl-L-homocysteine. In terms of biological role, catalyzes the methyl esterification of L-isoaspartyl residues in peptides and proteins that result from spontaneous decomposition of normal L-aspartyl and L-asparaginyl residues. It plays a role in the repair and/or degradation of damaged proteins. The chain is Protein-L-isoaspartate O-methyltransferase from Flavobacterium johnsoniae (strain ATCC 17061 / DSM 2064 / JCM 8514 / BCRC 14874 / CCUG 350202 / NBRC 14942 / NCIMB 11054 / UW101) (Cytophaga johnsonae).